Here is an 86-residue protein sequence, read N- to C-terminus: Large ribosomal subunit protein bL28 (86 aa).

It belongs to the bacterial ribosomal protein bL28 family.

In Bacteroides thetaiotaomicron (strain ATCC 29148 / DSM 2079 / JCM 5827 / CCUG 10774 / NCTC 10582 / VPI-5482 / E50), this protein is Large ribosomal subunit protein bL28.